Here is a 363-residue protein sequence, read N- to C-terminus: 3-dehydroquinate synthase (363 aa).

Residues 134–135, Lys-147, Lys-156, and 174–177 each bind NAD(+); these read TT and TLKT. Zn(2+) is bound by residues Glu-189, His-254, and His-271.

The protein belongs to the sugar phosphate cyclases superfamily. Dehydroquinate synthase family. Co(2+) is required as a cofactor. Requires Zn(2+) as cofactor. It depends on NAD(+) as a cofactor.

The protein localises to the cytoplasm. It carries out the reaction 7-phospho-2-dehydro-3-deoxy-D-arabino-heptonate = 3-dehydroquinate + phosphate. The protein operates within metabolic intermediate biosynthesis; chorismate biosynthesis; chorismate from D-erythrose 4-phosphate and phosphoenolpyruvate: step 2/7. In terms of biological role, catalyzes the conversion of 3-deoxy-D-arabino-heptulosonate 7-phosphate (DAHP) to dehydroquinate (DHQ). In Prochlorococcus marinus (strain MIT 9515), this protein is 3-dehydroquinate synthase.